Reading from the N-terminus, the 411-residue chain is MVLSQRQREELNKAIADYLASNGFMEALESFKKETDMPGDIDKKYAGLLEKKWTSVIRLQKKVMDLEGRLAEAEKEYISGTPSREKRSPTEWIPRPPERSALLGHRAPITRVLFHPVYSVVVSASEDASIKVWDYETGDFERTIKGHTDSVQDIAFDHTGQFLASCSADMTIKLWDFKSYECLRTMHGHDHNVSSVCFLPSGDHVVSCSRDKSIKMWEVATGYCVRTFTGHRDWVRMVRVNSDGSLLASCSNDQTVRVWVVGTKECKLELREHDHVVECVAWAPAHAQLCGAAGDSNRRPGAGGAQGTGPFLVSGSRDKTIKVWDVSTGLALFTLVGHDNWVRGVKFHPGGKYLLSASDDKTLRVWELAHQRCCKTLDAHSHFCTSLDFHRTAPYVVTGSVDQTVKVWECR.

The 33-residue stretch at 7–39 folds into the LisH domain; it reads QREELNKAIADYLASNGFMEALESFKKETDMPG. Residues 54 to 80 are a coiled coil; the sequence is TSVIRLQKKVMDLEGRLAEAEKEYISG. Residues 77–89 show a composition bias toward basic and acidic residues; that stretch reads YISGTPSREKRSP. Residues 77–96 are disordered; it reads YISGTPSREKRSPTEWIPRP. WD repeat units follow at residues 104-145, 146-187, 188-227, 230-269, 272-334, 337-376, and 379-411; these read GHRA…RTIK, GHTD…RTMH, GHDH…CVRT, GHRD…CKLE, EHDH…ALFT, GHDN…CCKT, and AHSH…WECR.

It belongs to the WD repeat LIS1/nudF family.

It is found in the cytoplasm. Its subcellular location is the cytoskeleton. It localises to the microtubule organizing center. The protein resides in the centrosome. Its function is as follows. Positively regulates the activity of the minus-end directed microtubule motor protein dynein. May enhance dynein-mediated microtubule sliding by targeting dynein to the microtubule plus end. Required for several dynein- and microtubule-dependent processes. The polypeptide is Lissencephaly-1 homolog (Ixodes scapularis (Black-legged tick)).